Reading from the N-terminus, the 810-residue chain is S-adenosyl-L-methionine-dependent tRNA 4-demethylwyosine synthase (810 aa).

Disordered regions lie at residues 86-116 (NGGG…KGGC) and 156-176 (RSST…VGKK). Positions 104-116 (GCCSSKGGKKGGC) are enriched in low complexity. Positions 159–172 (TPKVFSKNSSSNSR) are enriched in polar residues. One can recognise a Flavodoxin-like domain in the interval 205 to 360 (IYVLYSSLQG…KIDEWTSLLA (156 aa)). FMN-binding positions include 211-215 (SLQGA) and 304-337 (VLGL…RRIF). Residues 374-397 (DENADSEEDEEEGNGSDELGDVED) are compositionally biased toward acidic residues. The segment at 374-407 (DENADSEEDEEEGNGSDELGDVEDIGGKGSNGKF) is disordered. A Radical SAM core domain is found at 463-713 (FNIASSRCME…ELQRRGLHYD (251 aa)). Residues C479, C483, and C486 each contribute to the [4Fe-4S] cluster site. K496 is covalently cross-linked (Glycyl lysine isopeptide (Lys-Gly) (interchain with G-Cter in ubiquitin)). The disordered stretch occupies residues 782 to 810 (RVYRKDKKKQNKENQETTTRETPLPPIPA).

This sequence belongs to the TYW1 family. [4Fe-4S] cluster serves as cofactor.

It localises to the endoplasmic reticulum. It carries out the reaction N(1)-methylguanosine(37) in tRNA(Phe) + pyruvate + S-adenosyl-L-methionine = 4-demethylwyosine(37) in tRNA(Phe) + 5'-deoxyadenosine + L-methionine + CO2 + H2O. Its pathway is tRNA modification; wybutosine-tRNA(Phe) biosynthesis. Component of the wybutosine biosynthesis pathway. Wybutosine is a hyper modified guanosine with a tricyclic base found at the 3'-position adjacent to the anticodon of eukaryotic phenylalanine tRNA. Catalyzes the condensation of N-methylguanine with 2 carbon atoms from pyruvate to form the tricyclic 4-demethylwyosine, an intermediate in wybutosine biosynthesis. The polypeptide is S-adenosyl-L-methionine-dependent tRNA 4-demethylwyosine synthase (TYW1) (Saccharomyces cerevisiae (strain ATCC 204508 / S288c) (Baker's yeast)).